The following is a 492-amino-acid chain: Dynein regulatory complex subunit 2 (492 aa).

Coiled coils occupy residues 16 to 95, 256 to 318, and 373 to 401; these read LTEE…FERV, VQSA…AAQA, and LSEE…HDYS.

It belongs to the DRC2 family. As to quaternary structure, component of the nexin-dynein regulatory complex (N-DRC).

Its subcellular location is the cytoplasm. The protein resides in the cytoskeleton. It is found in the flagellum basal body. It localises to the cell projection. The protein localises to the cilium. Its subcellular location is the flagellum. The protein resides in the flagellum axoneme. Functionally, component of the nexin-dynein regulatory complex (N-DRC), a key regulator of ciliary/flagellar motility which maintains the alignment and integrity of the distal axoneme and regulates microtubule sliding in motile axonemes. Plays a critical role in the assembly of N-DRC and also stabilizes the assembly of multiple inner dynein arms and radial spokes. Coassembles with DRC1 to form a central scaffold needed for assembly of the N-DRC and its attachment to the outer doublet microtubules. This is Dynein regulatory complex subunit 2 (ccdc65) from Danio rerio (Zebrafish).